The chain runs to 143 residues: ATP synthase subunit b' (143 aa).

The helical transmembrane segment at Ala6 to Phe26 threads the bilayer.

This sequence belongs to the ATPase B chain family. F-type ATPases have 2 components, F(1) - the catalytic core - and F(0) - the membrane proton channel. F(1) has five subunits: alpha(3), beta(3), gamma(1), delta(1), epsilon(1). F(0) has four main subunits: a(1), b(1), b'(1) and c(10-14). The alpha and beta chains form an alternating ring which encloses part of the gamma chain. F(1) is attached to F(0) by a central stalk formed by the gamma and epsilon chains, while a peripheral stalk is formed by the delta, b and b' chains.

It localises to the cellular thylakoid membrane. F(1)F(0) ATP synthase produces ATP from ADP in the presence of a proton or sodium gradient. F-type ATPases consist of two structural domains, F(1) containing the extramembraneous catalytic core and F(0) containing the membrane proton channel, linked together by a central stalk and a peripheral stalk. During catalysis, ATP synthesis in the catalytic domain of F(1) is coupled via a rotary mechanism of the central stalk subunits to proton translocation. Its function is as follows. Component of the F(0) channel, it forms part of the peripheral stalk, linking F(1) to F(0). The b'-subunit is a diverged and duplicated form of b found in plants and photosynthetic bacteria. This Crocosphaera subtropica (strain ATCC 51142 / BH68) (Cyanothece sp. (strain ATCC 51142)) protein is ATP synthase subunit b'.